An 81-amino-acid chain; its full sequence is Photosystem I iron-sulfur center (81 aa).

2 consecutive 4Fe-4S ferredoxin-type domains span residues 2–31 (SHSV…MIPW) and 39–68 (IASA…VRVS). Residues cysteine 11, cysteine 14, cysteine 17, cysteine 21, cysteine 48, cysteine 51, cysteine 54, and cysteine 58 each contribute to the [4Fe-4S] cluster site.

The eukaryotic PSI reaction center is composed of at least 11 subunits. [4Fe-4S] cluster is required as a cofactor.

The protein localises to the plastid. The protein resides in the chloroplast thylakoid membrane. The enzyme catalyses reduced [plastocyanin] + hnu + oxidized [2Fe-2S]-[ferredoxin] = oxidized [plastocyanin] + reduced [2Fe-2S]-[ferredoxin]. In terms of biological role, apoprotein for the two 4Fe-4S centers FA and FB of photosystem I (PSI); essential for photochemical activity. FB is the terminal electron acceptor of PSI, donating electrons to ferredoxin. The C-terminus interacts with PsaA/B/D and helps assemble the protein into the PSI complex. Required for binding of PsaD and PsaE to PSI. PSI is a plastocyanin-ferredoxin oxidoreductase, converting photonic excitation into a charge separation, which transfers an electron from the donor P700 chlorophyll pair to the spectroscopically characterized acceptors A0, A1, FX, FA and FB in turn. The chain is Photosystem I iron-sulfur center from Daucus carota (Wild carrot).